Consider the following 258-residue polypeptide: MVLIRVLANLLILQLSYAQKSSELVVGGDECNINEHRSLVAIFNSTGFFCSGTLINQEWVVTAAHCDSNNFKMKFGAHSQKVLNEDEQIRNPKEKFICPNKKNNEVLDKDIMLIKLDSSVSNSEHIAPLSLPSSPPSVGSVCRIMGWGSITPTKVTYPDVPYCANINLLDDAECKPGYPELLPEYRTLCAGIVQGGKDTCGGDSGGPLICNGQFHGIVSYGAHPCGQSLKPGIYTTVFDYNDWIKSIIAGNTAATCPP.

Residues 1 to 18 (MVLIRVLANLLILQLSYA) form the signal peptide. Residues 19–24 (QKSSEL) constitute a propeptide that is removed on maturation. The region spanning 25 to 249 (VVGGDECNIN…YNDWIKSIIA (225 aa)) is the Peptidase S1 domain. 6 disulfides stabilise this stretch: Cys-31–Cys-163, Cys-50–Cys-66, Cys-98–Cys-256, Cys-142–Cys-210, Cys-174–Cys-189, and Cys-200–Cys-225. N-linked (GlcNAc...) asparagine glycosylation is present at Asn-44. Active-site charge relay system residues include His-65 and Asp-110. Catalysis depends on Ser-204, which acts as the Charge relay system.

This sequence belongs to the peptidase S1 family. Snake venom subfamily. In terms of assembly, monomer. In terms of tissue distribution, expressed by the venom gland.

The protein resides in the secreted. Its function is as follows. Snake venom serine protease that may act in the hemostasis system of the prey. The protein is Snake venom serine protease 1 (TLG1) of Craspedocephalus gramineus (Bamboo pit viper).